Here is a 73-residue protein sequence, read N- to C-terminus: Large ribosomal subunit protein uL29 (73 aa).

Belongs to the universal ribosomal protein uL29 family.

This Synechococcus sp. (strain JA-2-3B'a(2-13)) (Cyanobacteria bacterium Yellowstone B-Prime) protein is Large ribosomal subunit protein uL29.